Consider the following 74-residue polypeptide: MERQNLIEMEGVITESLPNAMFRVHLDNGFNVLAHISGKIRRNYIRILPGDRVKIELTPYDLTKGRITYRLRKR.

In terms of domain architecture, S1-like spans 1–72 (MERQNLIEME…TKGRITYRLR (72 aa)).

Belongs to the IF-1 family. As to quaternary structure, component of the 30S ribosomal translation pre-initiation complex which assembles on the 30S ribosome in the order IF-2 and IF-3, IF-1 and N-formylmethionyl-tRNA(fMet); mRNA recruitment can occur at any time during PIC assembly.

Its subcellular location is the plastid. It localises to the chloroplast. Its function is as follows. One of the essential components for the initiation of protein synthesis. Stabilizes the binding of IF-2 and IF-3 on the 30S subunit to which N-formylmethionyl-tRNA(fMet) subsequently binds. Helps modulate mRNA selection, yielding the 30S pre-initiation complex (PIC). Upon addition of the 50S ribosomal subunit IF-1, IF-2 and IF-3 are released leaving the mature 70S translation initiation complex. This is Translation initiation factor IF-1, chloroplastic from Mesostigma viride (Green alga).